Here is a 224-residue protein sequence, read N- to C-terminus: GrpE protein homolog 2, mitochondrial (224 aa).

Residues 1–31 (MAARLLWAVRRRMQPLAAHAASEGRGWLHPF) constitute a mitochondrion transit peptide. Residue lysine 141 is modified to N6-acetyllysine.

This sequence belongs to the GrpE family. As to quaternary structure, probable component of the PAM complex at least composed of a mitochondrial HSP70 protein, GRPEL1 or GRPEL2, TIMM44, TIMM16/PAM16 and TIMM14/DNAJC19.

Its subcellular location is the mitochondrion matrix. In terms of biological role, essential component of the PAM complex, a complex required for the translocation of transit peptide-containing proteins from the inner membrane into the mitochondrial matrix in an ATP-dependent manner. Seems to control the nucleotide-dependent binding of mitochondrial HSP70 to substrate proteins. Stimulates ATPase activity of mt-HSP70. May also serve to modulate the interconversion of oligomeric (inactive) and monomeric (active) forms of mt-HSP70. This is GrpE protein homolog 2, mitochondrial (GRPEL2) from Bos taurus (Bovine).